Here is a 698-residue protein sequence, read N- to C-terminus: Probable threonine--tRNA ligase 2, cytoplasmic (698 aa).

The TGS domain occupies glycine 38–glutamate 100. The disordered stretch occupies residues asparagine 541–asparagine 560.

This sequence belongs to the class-II aminoacyl-tRNA synthetase family.

It localises to the cytoplasm. The enzyme catalyses tRNA(Thr) + L-threonine + ATP = L-threonyl-tRNA(Thr) + AMP + diphosphate + H(+). The protein is Probable threonine--tRNA ligase 2, cytoplasmic (thrS2) of Dictyostelium discoideum (Social amoeba).